Reading from the N-terminus, the 448-residue chain is MLIQRGGLKVVAGLGISGVSAVNFLHEQGYQVAVTDSRPTPPGHDQIPAGVKTSFGQLDQELLLQAEEIILSPGLAPQLPEIQAAIAKGISVVGDIQLLRRATDVPIVAITGSNAKSTVTTLIGLMAKDAGKKVAVGGNLGRPALDLLKDQPELLVLELSSFQLETTSHLNAEVAVVLNMSEDHLDRHGNMLGYHQAKHRIFQGAKKVVFNRDDALSRPLVPDTTPMQSFGLNAPDLNQYGVLRDADGTLWLARGLQRLIKSSDLYIQGMHNVANALACLALGEAIGLPMESMLETLKQFKGLEHRCEYVKTVHDVRYYNDSKGTNVGATLAAIDGLGAAIEVKKGKVALILGGQGKGQDFGPLRSSIEKYAKVVVLIGEDAPVIEQAIQGATKILHAATLKEAVELCQRETQAEDVVLLSPACASFDMFKSYNDRGQQFVACVNSLV.

Gly112–Thr118 serves as a coordination point for ATP.

It belongs to the MurCDEF family.

The protein resides in the cytoplasm. It carries out the reaction UDP-N-acetyl-alpha-D-muramoyl-L-alanine + D-glutamate + ATP = UDP-N-acetyl-alpha-D-muramoyl-L-alanyl-D-glutamate + ADP + phosphate + H(+). The protein operates within cell wall biogenesis; peptidoglycan biosynthesis. Its function is as follows. Cell wall formation. Catalyzes the addition of glutamate to the nucleotide precursor UDP-N-acetylmuramoyl-L-alanine (UMA). The chain is UDP-N-acetylmuramoylalanine--D-glutamate ligase from Acinetobacter baumannii (strain AB307-0294).